Consider the following 79-residue polypeptide: UPF0180 protein Bcer98_1118 (79 aa).

Belongs to the UPF0180 family.

In Bacillus cytotoxicus (strain DSM 22905 / CIP 110041 / 391-98 / NVH 391-98), this protein is UPF0180 protein Bcer98_1118.